A 144-amino-acid polypeptide reads, in one-letter code: Interferon-induced transmembrane protein 2 (144 aa).

N-acetylmethionine is present on Met-1. The Cytoplasmic portion of the chain corresponds to 1–56 (MSHNSQAFLSTNAGLPPSYETIKEEYGVTELGEPSNSAVVRTTVINMPREVSVPDH). Position 19 is a phosphotyrosine (Tyr-19). The segment at residues 57-77 (VVWSLFNTLFFNACCLGFVAY) is an intramembrane region (helical). S-palmitoyl cysteine attachment occurs at residues Cys-70, Cys-71, and Cys-104. Topologically, residues 78–110 (AYSVKSRDRKMVGDVVGAQAYASTAKCLNISSL) are cytoplasmic. The chain crosses the membrane as a helical span at residues 111–131 (IFSILMVIICIIIFSTTSVVV). The Extracellular portion of the chain corresponds to 132-144 (FQSFAQRTPHSGF).

Belongs to the CD225/Dispanin family. Interacts with CD81. Post-translationally, palmitoylation on membrane-proximal cysteines controls clustering in membrane compartments and antiviral activity. Phosphorylation at Tyr-19 is required for endosomal and lysosomal location. As to expression, predominantly expressed in nascent primordial germ cells, as well as in gonadal germ cells.

It is found in the cell membrane. Its subcellular location is the lysosome membrane. The protein localises to the late endosome membrane. IFN-induced antiviral protein which inhibits the entry of viruses to the host cell cytoplasm, permitting endocytosis, but preventing subsequent viral fusion and release of viral contents into the cytosol. Active against multiple viruses, including influenza A virus, SARS coronavirus (SARS-CoV), Marburg virus (MARV) and Ebola virus (EBOV), Dengue virus (DNV) and West Nile virus (WNV). Can inhibit: influenza virus hemagglutinin protein-mediated viral entry, MARV and EBOV GP1,2-mediated viral entry and SARS-CoV S protein-mediated viral entry. Induces cell cycle arrest and mediates apoptosis by caspase activation and in p53-independent manner. In Mus musculus (Mouse), this protein is Interferon-induced transmembrane protein 2 (Ifitm2).